The following is a 53-amino-acid chain: Neuronal protein NP-190 (53 aa).

As to expression, mainly expressed in the fetal brain where it is specifically localized to the proximal axonal segments, cell bodies and growth cones. Lower level of expression was also detected in the fetal heart and the skeletal muscle. No expression in kidney, liver, lung or spleen.

It localises to the membrane. In terms of biological role, neuronal antigen that may play a role in brain development. May be involved in neurite formation or axonal guidance. The sequence is that of Neuronal protein NP-190 from Sus scrofa (Pig).